The following is a 150-amino-acid chain: Large ribosomal subunit protein bL9 (150 aa).

It belongs to the bacterial ribosomal protein bL9 family.

Its function is as follows. Binds to the 23S rRNA. This chain is Large ribosomal subunit protein bL9, found in Polynucleobacter necessarius subsp. necessarius (strain STIR1).